Reading from the N-terminus, the 1535-residue chain is Putative protein TIC 214 C-terminal part (1535 aa).

Disordered regions lie at residues E264 to D283, E312 to A333, and D1263 to K1282.

This sequence belongs to the TIC214 family. In terms of assembly, part of the Tic complex.

It localises to the plastid. Its subcellular location is the chloroplast. In terms of biological role, involved in protein precursor import into chloroplasts. May be part of an intermediate translocation complex acting as a protein-conducting channel at the inner envelope. The protein is Putative protein TIC 214 C-terminal part of Piper cenocladum (Ant piper).